The chain runs to 39 residues: Omega-theraphotoxin-Ba1b (39 aa).

Cystine bridges form between Cys-4-Cys-17, Cys-8-Cys-31, and Cys-25-Cys-36.

The protein belongs to the neurotoxin 12 (Hwtx-2) family. 06 (TXP1) subfamily. In terms of tissue distribution, expressed by the venom gland.

It localises to the secreted. Functionally, inhibits voltage-gated calcium channels (Cav) in rat cerebellar granule cells. Has insecticidal activity to crickets (Acheta domesticus). Is not toxic to mice. The sequence is that of Omega-theraphotoxin-Ba1b from Brachypelma albiceps (Mexican golden redrump tarantula).